The following is a 102-amino-acid chain: 10 kDa heat shock protein, mitochondrial (102 aa).

Ala2 carries the post-translational modification N-acetylalanine. Lys8 is modified (N6-acetyllysine). Lys28 carries the post-translational modification N6-succinyllysine. Lys40 is modified (N6-acetyllysine; alternate). Lys40, Lys54, and Lys56 each carry N6-malonyllysine; alternate. N6-succinyllysine; alternate is present on residues Lys40, Lys54, Lys56, Lys66, and Lys70. 3 positions are modified to N6-acetyllysine; alternate: Lys56, Lys66, and Lys70. A Phosphothreonine modification is found at Thr79. N6-acetyllysine; alternate is present on residues Lys80 and Lys86. Lys80 and Lys86 each carry N6-succinyllysine; alternate. An N6-acetyllysine modification is found at Lys99.

The protein belongs to the GroES chaperonin family. Homoheptamer arranged in a ring structure. 2 heptameric Hsp10 rings interact with a Hsp60 tetradecamer in the structure of a back-to-back double heptameric ring to form the symmetrical football complex.

The protein localises to the mitochondrion matrix. Its function is as follows. Co-chaperonin implicated in mitochondrial protein import and macromolecular assembly. Together with Hsp60, facilitates the correct folding of imported proteins. May also prevent misfolding and promote the refolding and proper assembly of unfolded polypeptides generated under stress conditions in the mitochondrial matrix. The functional units of these chaperonins consist of heptameric rings of the large subunit Hsp60, which function as a back-to-back double ring. In a cyclic reaction, Hsp60 ring complexes bind one unfolded substrate protein per ring, followed by the binding of ATP and association with 2 heptameric rings of the co-chaperonin Hsp10. This leads to sequestration of the substrate protein in the inner cavity of Hsp60 where, for a certain period of time, it can fold undisturbed by other cell components. Synchronous hydrolysis of ATP in all Hsp60 subunits results in the dissociation of the chaperonin rings and the release of ADP and the folded substrate protein. This is 10 kDa heat shock protein, mitochondrial (HSPE1) from Bos taurus (Bovine).